A 122-amino-acid polypeptide reads, in one-letter code: MIQMQSMLGVADNSGARSVMCIKVLGGSHRRYAGIGDIIKVSIKEAIPRGKVKKGDVYNAVVVRTRKGVRRPDGSVIRFDNNAAVLLNNNQQPIGTRIFGPVTRELRNEKFMKIVSLAPEVL.

The protein belongs to the universal ribosomal protein uL14 family. As to quaternary structure, part of the 50S ribosomal subunit. Forms a cluster with proteins L3 and L19. In the 70S ribosome, L14 and L19 interact and together make contacts with the 16S rRNA in bridges B5 and B8.

Functionally, binds to 23S rRNA. Forms part of two intersubunit bridges in the 70S ribosome. This Aeromonas salmonicida (strain A449) protein is Large ribosomal subunit protein uL14.